Consider the following 305-residue polypeptide: NADH-cytochrome b5 reductase 1 (305 aa).

A helical membrane pass occupies residues 8 to 28 (VLLASLGVGLVTLLGLAVGSY). The region spanning 44-156 (NEKYLLRLLD…RGPSGLLTYT (113 aa)) is the FAD-binding FR-type domain. FAD-binding positions include 136 to 166 (DSLK…IQPN) and 175 to 210 (VAKK…QCFL).

It belongs to the flavoprotein pyridine nucleotide cytochrome reductase family. FAD is required as a cofactor. In terms of tissue distribution, widely expressed.

Its subcellular location is the membrane. It catalyses the reaction 2 Fe(III)-[cytochrome b5] + NADH = 2 Fe(II)-[cytochrome b5] + NAD(+) + H(+). In terms of biological role, NADH-cytochrome b5 reductases are involved in desaturation and elongation of fatty acids, cholesterol biosynthesis, drug metabolism, and, in erythrocyte, methemoglobin reduction. In Homo sapiens (Human), this protein is NADH-cytochrome b5 reductase 1 (CYB5R1).